An 85-amino-acid polypeptide reads, in one-letter code: Probable oxaloacetate decarboxylase gamma chain (85 aa).

Residues isoleucine 15–isoleucine 35 traverse the membrane as a helical segment.

Belongs to the OadG family. As to quaternary structure, heterotrimer of an alpha, a beta and a gamma subunit. It depends on Na(+) as a cofactor.

The protein resides in the cell membrane. The catalysed reaction is oxaloacetate + 2 Na(+)(in) + H(+) = pyruvate + 2 Na(+)(out) + CO2. Its function is as follows. Catalyzes the decarboxylation of oxaloacetate coupled to Na(+) translocation. In Actinobacillus pleuropneumoniae serotype 5b (strain L20), this protein is Probable oxaloacetate decarboxylase gamma chain.